A 193-amino-acid chain; its full sequence is Ribosomal RNA small subunit methyltransferase G (193 aa).

S-adenosyl-L-methionine-binding positions include Gly61, Leu66, 112–113, and Arg126; that span reads IE.

Belongs to the methyltransferase superfamily. RNA methyltransferase RsmG family.

It localises to the cytoplasm. It carries out the reaction guanosine(527) in 16S rRNA + S-adenosyl-L-methionine = N(7)-methylguanosine(527) in 16S rRNA + S-adenosyl-L-homocysteine. In terms of biological role, specifically methylates the N7 position of guanine in position 527 of 16S rRNA. This is Ribosomal RNA small subunit methyltransferase G from Paracoccus denitrificans (strain Pd 1222).